The chain runs to 762 residues: Cell surface protein (762 aa).

The N-terminal stretch at 1 to 26 (MKNLKKLIAVVSTFALVFSAMAVGFA) is a signal peptide. 3 SLH domains span residues 27–90 (ATTP…EMAK), 92–155 (EKSA…WPYG), and 156–204 (YLAK…KEVL). O-linked (Glc...) tyrosine glycans are attached at residues Y297, Y516, Y520, and Y632.

In terms of processing, glycosylated; contains 8% carbohydrates, which correspond to about 40 to 50 sugar molecules per monomer. O-linked glycans consist of Glc, GalNAc and GlcNAc.

Its subcellular location is the secreted. It localises to the cell wall. It is found in the S-layer. Functionally, the S-layer is a paracrystalline mono-layered assembly of proteins which coat the surface of bacteria. This Thermoanaerobacter kivui (Acetogenium kivui) protein is Cell surface protein.